The primary structure comprises 445 residues: Na(+)-translocating NADH-quinone reductase subunit A (445 aa).

It belongs to the NqrA family. Composed of six subunits; NqrA, NqrB, NqrC, NqrD, NqrE and NqrF.

The enzyme catalyses a ubiquinone + n Na(+)(in) + NADH + H(+) = a ubiquinol + n Na(+)(out) + NAD(+). In terms of biological role, NQR complex catalyzes the reduction of ubiquinone-1 to ubiquinol by two successive reactions, coupled with the transport of Na(+) ions from the cytoplasm to the periplasm. NqrA to NqrE are probably involved in the second step, the conversion of ubisemiquinone to ubiquinol. The polypeptide is Na(+)-translocating NADH-quinone reductase subunit A (Teredinibacter turnerae (strain ATCC 39867 / T7901)).